A 331-amino-acid chain; its full sequence is tRNA N6-adenosine threonylcarbamoyltransferase (331 aa).

His-108, His-112, and Tyr-129 together coordinate a divalent metal cation. Residues 129–133, Asp-161, Gly-176, Glu-180, and Asn-261 each bind substrate; that span reads YASGG. Asp-289 lines the a divalent metal cation pocket.

It belongs to the KAE1 / TsaD family. Component of the EKC/KEOPS complex composed of at least BUD32, CGI121, GON7, KAE1 and PCC1; the whole complex dimerizes. Requires a divalent metal cation as cofactor.

It localises to the cytoplasm. The protein resides in the nucleus. It catalyses the reaction L-threonylcarbamoyladenylate + adenosine(37) in tRNA = N(6)-L-threonylcarbamoyladenosine(37) in tRNA + AMP + H(+). Functionally, component of the EKC/KEOPS complex that is required for the formation of a threonylcarbamoyl group on adenosine at position 37 (t(6)A37) in tRNAs that read codons beginning with adenine. The complex is probably involved in the transfer of the threonylcarbamoyl moiety of threonylcarbamoyl-AMP (TC-AMP) to the N6 group of A37. KAE1 likely plays a direct catalytic role in this reaction, but requires other protein(s) of the complex to fulfill this activity. The EKC/KEOPS complex also promotes both telomere uncapping and telomere elongation. The complex is required for efficient recruitment of transcriptional coactivators. In Encephalitozoon cuniculi (strain GB-M1) (Microsporidian parasite), this protein is tRNA N6-adenosine threonylcarbamoyltransferase.